Here is a 965-residue protein sequence, read N- to C-terminus: Aminopeptidase N (965 aa).

The Cytoplasmic segment spans residues methionine 1–serine 8. Residues lysine 9 to valine 32 form a helical; Signal-anchor for type II membrane protein membrane-spanning segment. Residues tyrosine 33 to serine 65 form a cytosolic Ser/Thr-rich junction region. The Extracellular segment spans residues tyrosine 33–serine 965. Positions asparagine 40–serine 65 are disordered. Over residues glycine 44–threonine 61 the composition is skewed to low complexity. The interval lysine 66–serine 965 is metalloprotease. Asparagine 125 is a glycosylation site (N-linked (GlcNAc...) asparagine). Tyrosine 173 carries the sulfotyrosine modification. Asparagine 231, asparagine 260, and asparagine 316 each carry an N-linked (GlcNAc...) asparagine glycan. Glycine 349–asparagine 353 serves as a coordination point for substrate. Histidine 385 is a Zn(2+) binding site. Residue glutamate 386 is the Proton acceptor of the active site. Histidine 389 and glutamate 408 together coordinate Zn(2+). Tyrosine 416 carries the post-translational modification Sulfotyrosine. Residues asparagine 508, asparagine 569, asparagine 624, asparagine 680, asparagine 734, and asparagine 738 are each glycosylated (N-linked (GlcNAc...) asparagine). Disulfide bonds link cysteine 760-cysteine 767 and cysteine 797-cysteine 833.

Belongs to the peptidase M1 family. In terms of assembly, homodimer. Interacts with SLC6A19. Zn(2+) serves as cofactor. Post-translationally, sulfated. In terms of processing, N- and O-glycosylated. May undergo proteolysis and give rise to a soluble form.

It localises to the cell membrane. The enzyme catalyses Release of an N-terminal amino acid, Xaa-|-Yaa- from a peptide, amide or arylamide. Xaa is preferably Ala, but may be most amino acids including Pro (slow action). When a terminal hydrophobic residue is followed by a prolyl residue, the two may be released as an intact Xaa-Pro dipeptide.. In terms of biological role, broad specificity aminopeptidase which plays a role in the final digestion of peptides generated from hydrolysis of proteins by gastric and pancreatic proteases. Also involved in the processing of various peptides including peptide hormones, such as angiotensin III and IV, neuropeptides, and chemokines. May also be involved the cleavage of peptides bound to major histocompatibility complex class II molecules of antigen presenting cells. May have a role in angiogenesis and promote cholesterol crystallization. May have a role in amino acid transport by acting as binding partner of amino acid transporter SLC6A19 and regulating its activity. The chain is Aminopeptidase N (ANPEP) from Bos taurus (Bovine).